The primary structure comprises 123 residues: Small ribosomal subunit protein uS12 (123 aa).

Position 89 is a 3-methylthioaspartic acid (Asp89). The tract at residues 101-123 (SLDTSGVKDRKQGRSKYGAKRPK) is disordered. A compositionally biased stretch (basic residues) spans 113 to 123 (GRSKYGAKRPK).

The protein belongs to the universal ribosomal protein uS12 family. In terms of assembly, part of the 30S ribosomal subunit. Contacts proteins S8 and S17. May interact with IF1 in the 30S initiation complex.

Its function is as follows. With S4 and S5 plays an important role in translational accuracy. In terms of biological role, interacts with and stabilizes bases of the 16S rRNA that are involved in tRNA selection in the A site and with the mRNA backbone. Located at the interface of the 30S and 50S subunits, it traverses the body of the 30S subunit contacting proteins on the other side and probably holding the rRNA structure together. The combined cluster of proteins S8, S12 and S17 appears to hold together the shoulder and platform of the 30S subunit. The polypeptide is Small ribosomal subunit protein uS12 (Stutzerimonas stutzeri (strain A1501) (Pseudomonas stutzeri)).